A 69-amino-acid chain; its full sequence is Small integral membrane protein 20 (69 aa).

The Mitochondrial matrix portion of the chain corresponds to 1–8 (MAAARNLR). A helical membrane pass occupies residues 9–29 (TALIFGGFISMVGAAFYPIYF). The Mitochondrial intermembrane segment spans residues 30–69 (RPLLRLEEYQKEQAVNRAGIVQEDVQPPGLKVWSDPFGRK). Phe66 carries the phenylalanine amide modification.

As to quaternary structure, component of the MITRAC (mitochondrial translation regulation assembly intermediate of cytochrome c oxidase complex) complex, the core components of this complex being Coa3/Mitrac12 and Cox14. Interacts with Coa3/Mitrac12 and Cox4i1. Directly interacts with newly synthesized Mt-Co1/Cox1. Highly expressed in the hypothalamus, substantia nigra reticulata, Edinger-Westphal nucleus, and nucleus of the solitary tract/dorsal motor nucleus of the vagus, the spinal cord, and sensory ganglia (at protein level). Also expressed in the heart, thymus, esophagus, stomach, spleen, lung, pituitary gland, kidney, jejunum, duodenum, ileum, cerebrum, pons, and colon (at protein level). Expressed in preadipocytes and apidocytes (at protein level). Expressed in pancreatic islet cells (at protein level).

The protein localises to the mitochondrion inner membrane. It localises to the secreted. Its function is as follows. Component of the MITRAC (mitochondrial translation regulation assembly intermediate of cytochrome c oxidase complex) complex, that regulates cytochrome c oxidase assembly. Promotes the progression of complex assembly after the association of Mt-Co1/Cox11 with Cox4I1 and Cox6c. Chaperone-like assembly factor required to stabilize newly synthesized Mt-Co1/Cox1 and to prevent its premature turnover. In terms of biological role, peptide involved in a broad spectrum of regulatory functions. Is a ligand for GPR173. As part of the reproductive cycle, it regulates gonadotropin-releasing hormone (GnRH) signaling in the hypothalamus and pituitary gland which augments the release of luteinizing hormone. More specifically, it regulates the expression of transcription factors CEBPB and POU2F1/OCT1 through the cAMP-PKA signaling pathway, which subsequently regulate the expression of GNRHR and KISS1. Plays a protective role in memory retention through activation of GNRHR. Regulates the secretion of AVP by hypothalamic neurons. Plays a role in the transduction of the itch sensation. Induces anxiolytic effects, reducing behavior associated with anxiety. Regulates food intake as well as satiation and satiety by increasing NUCB2 expression in neurons. In the ovary, it regulates follicular growth by stimulating granulosa cell proliferation by increasing the expression of GPR173, CREB1, CYP19A1, KITLG, FSHR, and LHCGR. It also increases the production of estradiol (E2). In the heart, it regulates contractility and relaxation by activating the AKT1-NOS3 and MAPK1-MAPK3 signaling pathways. It also plays a cardioprotective role during ischemia, where it activates the SAFE and RISK pathways. Stimulates the proliferation and differentiation of preadipocytes. In pancreatic islet cells, it induces proliferation of islet cells as well as the production of INS1 and INS2 through activation of the MAPK1-MAPK3 signaling pathways. The polypeptide is Small integral membrane protein 20 (Rattus norvegicus (Rat)).